Consider the following 793-residue polypeptide: Phosphoribosylformylglycinamidine synthase subunit PurL (793 aa).

Residue H53 is part of the active site. ATP is bound by residues Y56 and K95. Position 97 (E97) interacts with Mg(2+). Residues 98–101 (SHNH) and R120 each bind substrate. H99 functions as the Proton acceptor in the catalytic mechanism. Position 121 (D121) interacts with Mg(2+). Residue Q244 participates in substrate binding. Mg(2+) is bound at residue D272. Substrate is bound at residue 316 to 318 (ESQ). Positions 523 and 560 each coordinate ATP. N561 contacts Mg(2+). Residue S563 coordinates substrate.

It belongs to the FGAMS family. Monomer. Part of the FGAM synthase complex composed of 1 PurL, 1 PurQ and 2 PurS subunits.

Its subcellular location is the cytoplasm. The enzyme catalyses N(2)-formyl-N(1)-(5-phospho-beta-D-ribosyl)glycinamide + L-glutamine + ATP + H2O = 2-formamido-N(1)-(5-O-phospho-beta-D-ribosyl)acetamidine + L-glutamate + ADP + phosphate + H(+). Its pathway is purine metabolism; IMP biosynthesis via de novo pathway; 5-amino-1-(5-phospho-D-ribosyl)imidazole from N(2)-formyl-N(1)-(5-phospho-D-ribosyl)glycinamide: step 1/2. Its function is as follows. Part of the phosphoribosylformylglycinamidine synthase complex involved in the purines biosynthetic pathway. Catalyzes the ATP-dependent conversion of formylglycinamide ribonucleotide (FGAR) and glutamine to yield formylglycinamidine ribonucleotide (FGAM) and glutamate. The FGAM synthase complex is composed of three subunits. PurQ produces an ammonia molecule by converting glutamine to glutamate. PurL transfers the ammonia molecule to FGAR to form FGAM in an ATP-dependent manner. PurS interacts with PurQ and PurL and is thought to assist in the transfer of the ammonia molecule from PurQ to PurL. This Prochlorococcus marinus (strain SARG / CCMP1375 / SS120) protein is Phosphoribosylformylglycinamidine synthase subunit PurL.